Here is a 240-residue protein sequence, read N- to C-terminus: MSVAAPAHKRILLKLSGEALMGDDAFGINRATIVRMVEEIAEVTRMGVQVAVVIGGGNIFRGVAGGSVGMDRATADYMGMLATVMNALALADAMDKQGLIARVMSAIGIEQVVEPYVRPKALQYLEEGKVVVFAAGTGNPFFTTDTAAALRGAEIGAEVVLKATKVDGVYTADPKKDPTATRYTKLTFDEAMSRNLGILDATAFALCRDQKLPIRVFSIVKHGALKRVVMGEDEGTLVYA.

14 to 17 (KLSG) is a binding site for ATP. A UMP-binding site is contributed by glycine 56. Glycine 57 and arginine 61 together coordinate ATP. Residues aspartate 76 and 137 to 144 (TGNPFFTT) contribute to the UMP site. Positions 164, 170, and 173 each coordinate ATP.

This sequence belongs to the UMP kinase family. Homohexamer.

It localises to the cytoplasm. It catalyses the reaction UMP + ATP = UDP + ADP. Its pathway is pyrimidine metabolism; CTP biosynthesis via de novo pathway; UDP from UMP (UMPK route): step 1/1. Its activity is regulated as follows. Inhibited by UTP. Catalyzes the reversible phosphorylation of UMP to UDP. In Paracidovorax citrulli (strain AAC00-1) (Acidovorax citrulli), this protein is Uridylate kinase.